A 536-amino-acid chain; its full sequence is Quinate permease (536 aa).

Residues 1–26 are Cytoplasmic-facing; sequence MTLLALKEDRPTPKAVYNWRVYTCAA. Residues 27–47 traverse the membrane as a helical segment; that stretch reads IASFASCMIGYDSAFIGTTLA. The Extracellular portion of the chain corresponds to 48–74; that stretch reads LPSFKKEFDFASYTPGALALLQSNIVS. The chain crosses the membrane as a helical span at residues 75–95; that stretch reads VYQAGAFFGSLFAFATSYFLG. Residues 96–98 lie on the Cytoplasmic side of the membrane; the sequence is RRK. Residues 99 to 119 form a helical membrane-spanning segment; it reads SLIAFSVVFIIGAAIMLAADG. The Extracellular segment spans residues 120 to 131; the sequence is QGRGIAPIIAGR. Residues 132-152 form a helical membrane-spanning segment; it reads VLAGIGVGGASNMVPIYISEL. Topologically, residues 153–160 are cytoplasmic; the sequence is APPAVRGR. The chain crosses the membrane as a helical span at residues 161–181; that stretch reads LVGIYELGWQIGGLVGFWINY. Residues 182–195 lie on the Extracellular side of the membrane; the sequence is GVNTTMAPTRSQWL. Residue asparagine 184 is glycosylated (N-linked (GlcNAc...) asparagine). The helical transmembrane segment at 196-216 threads the bilayer; the sequence is IPFAVQLIPAGLLFLGSFWIP. Topologically, residues 217 to 285 are cytoplasmic; that stretch reads ESPRWLFANG…SLKQRKVQWR (69 aa). Residues 286 to 306 traverse the membrane as a helical segment; it reads FFLGGMLFLWQNGSGINAINY. At 307-327 the chain is on the extracellular side; it reads YSPTVFRSIGITGTNTGFLTT. A helical transmembrane segment spans residues 328 to 349; that stretch reads GIFGVVKMVLTIVWLLWLVDLV. Residues 350–352 are Cytoplasmic-facing; that stretch reads GRR. Residues 353 to 373 traverse the membrane as a helical segment; it reads RMLFIGATGGSLCMWFIGAYI. The Extracellular portion of the chain corresponds to 374–389; it reads KIAGPGSTKAEDAKLT. Residues 390–410 traverse the membrane as a helical segment; that stretch reads SGGIAAIFFFYLWTAFYTPSW. At 411 to 435 the chain is on the cytoplasmic side; that stretch reads NGTPWVINSEMFDQNTRSLGQASAA. Residues 436–456 traverse the membrane as a helical segment; it reads ANNWFWNFIISRFTPQMFIKM. The Extracellular portion of the chain corresponds to 457-458; the sequence is EY. A helical transmembrane segment spans residues 459-479; that stretch reads GVYFFFASLMLLSIVFIYFFI. The Cytoplasmic segment spans residues 480-536; it reads PETKSIPLEAMDRLFEIKPVHNANKILMAELNFDRNPEREESSLDEKDRVTQTENAV. A compositionally biased stretch (basic and acidic residues) spans 516-530; sequence PEREESSLDEKDRVT. Residues 516–536 are disordered; the sequence is PEREESSLDEKDRVTQTENAV.

The protein belongs to the major facilitator superfamily. Sugar transporter (TC 2.A.1.1) family.

The protein localises to the membrane. The chain is Quinate permease (qa-y) from Neurospora terricola.